The chain runs to 310 residues: tRNA dimethylallyltransferase (310 aa).

14–21 (GPTASGKS) contacts ATP. A substrate-binding site is contributed by 16–21 (TASGKS). Interaction with substrate tRNA stretches follow at residues 39–42 (DSMQ) and 163–167 (QRIVR).

This sequence belongs to the IPP transferase family. Monomer. Mg(2+) serves as cofactor.

The enzyme catalyses adenosine(37) in tRNA + dimethylallyl diphosphate = N(6)-dimethylallyladenosine(37) in tRNA + diphosphate. Its function is as follows. Catalyzes the transfer of a dimethylallyl group onto the adenine at position 37 in tRNAs that read codons beginning with uridine, leading to the formation of N6-(dimethylallyl)adenosine (i(6)A). In Brucella abortus (strain S19), this protein is tRNA dimethylallyltransferase.